The following is a 619-amino-acid chain: 2-succinyl-5-enolpyruvyl-6-hydroxy-3-cyclohexene-1-carboxylate synthase (619 aa).

Residues 385–398 show a composition bias toward polar residues; the sequence is SSAHQSLAATNSDS. Residues 385–415 form a disordered region; the sequence is SSAHQSLAATNSDSSTDDIIENTDEEGSNES. Over residues 399–413 the composition is skewed to acidic residues; it reads STDDIIENTDEEGSN.

This sequence belongs to the TPP enzyme family. MenD subfamily. In terms of assembly, homodimer. Mg(2+) is required as a cofactor. Requires Mn(2+) as cofactor. Thiamine diphosphate serves as cofactor.

The enzyme catalyses isochorismate + 2-oxoglutarate + H(+) = 5-enolpyruvoyl-6-hydroxy-2-succinyl-cyclohex-3-ene-1-carboxylate + CO2. Its pathway is quinol/quinone metabolism; 1,4-dihydroxy-2-naphthoate biosynthesis; 1,4-dihydroxy-2-naphthoate from chorismate: step 2/7. It functions in the pathway quinol/quinone metabolism; menaquinone biosynthesis. In terms of biological role, catalyzes the thiamine diphosphate-dependent decarboxylation of 2-oxoglutarate and the subsequent addition of the resulting succinic semialdehyde-thiamine pyrophosphate anion to isochorismate to yield 2-succinyl-5-enolpyruvyl-6-hydroxy-3-cyclohexene-1-carboxylate (SEPHCHC). The polypeptide is 2-succinyl-5-enolpyruvyl-6-hydroxy-3-cyclohexene-1-carboxylate synthase (Haloquadratum walsbyi (strain DSM 16790 / HBSQ001)).